A 364-amino-acid chain; its full sequence is MTRPIVADISAAALRHNVAVVREHAPRARIMAAVKANAYGHGVTLCAPVLAEAGVDAFAVASLEEAEALHALGLERPICLLGGPFDADEVSVAAERAYLLVIHEQRQLQWLETRAADAALRLFIKVDTGMHRLGFAPERLPALFAALQRHPRWEVLGLMSHLARSDTPDDPFNRQQAGVFADAIAHVGHVTAGQHSLANSGGVLALPFTHQYWVRPGLMLYGLSPFAGRRGSEIGLQPVLSWRSAVVAIRELGPGDWLGYGAAWQAPARCRVGVVAAGYGDGYPRHLGCGAPVTVAGQTTRTLARVSMDMLFVDLTAVEADIGAPVVLMGAGGPPLESLAAELGTISYEMSCRMQMRVPRRLVS.

Lysine 35 acts as the Proton acceptor; specific for D-alanine in catalysis. Lysine 35 carries the N6-(pyridoxal phosphate)lysine modification. Arginine 132 lines the substrate pocket. The active-site Proton acceptor; specific for L-alanine is tyrosine 260. Methionine 308 contacts substrate.

Belongs to the alanine racemase family. Requires pyridoxal 5'-phosphate as cofactor.

The catalysed reaction is L-alanine = D-alanine. It participates in amino-acid biosynthesis; D-alanine biosynthesis; D-alanine from L-alanine: step 1/1. Catalyzes the interconversion of L-alanine and D-alanine. May also act on other amino acids. This Acidithiobacillus ferrooxidans (strain ATCC 23270 / DSM 14882 / CIP 104768 / NCIMB 8455) (Ferrobacillus ferrooxidans (strain ATCC 23270)) protein is Alanine racemase (alr).